The chain runs to 209 residues: Uracil phosphoribosyltransferase (209 aa).

5-phospho-alpha-D-ribose 1-diphosphate contacts are provided by residues R79, R104, and 131-139 (DPMLATGNS). Residues I194 and 199–201 (GDA) each bind uracil. D200 provides a ligand contact to 5-phospho-alpha-D-ribose 1-diphosphate.

It belongs to the UPRTase family. Mg(2+) serves as cofactor.

It catalyses the reaction UMP + diphosphate = 5-phospho-alpha-D-ribose 1-diphosphate + uracil. Its pathway is pyrimidine metabolism; UMP biosynthesis via salvage pathway; UMP from uracil: step 1/1. With respect to regulation, allosterically activated by GTP. Catalyzes the conversion of uracil and 5-phospho-alpha-D-ribose 1-diphosphate (PRPP) to UMP and diphosphate. In Rhizobium meliloti (strain 1021) (Ensifer meliloti), this protein is Uracil phosphoribosyltransferase.